A 369-amino-acid polypeptide reads, in one-letter code: Probable dual-specificity RNA methyltransferase RlmN (369 aa).

Catalysis depends on Glu108, which acts as the Proton acceptor. The Radical SAM core domain occupies 114-351 (YPDRATLCIS…LAQGVSCTVR (238 aa)). The cysteines at positions 121 and 362 are disulfide-linked. 3 residues coordinate [4Fe-4S] cluster: Cys128, Cys132, and Cys135. Residues 183 to 184 (GE), Ser217, 240 to 242 (SLH), and Asn319 each bind S-adenosyl-L-methionine. Residue Cys362 is the S-methylcysteine intermediate of the active site.

Belongs to the radical SAM superfamily. RlmN family. The cofactor is [4Fe-4S] cluster.

Its subcellular location is the cytoplasm. The enzyme catalyses adenosine(2503) in 23S rRNA + 2 reduced [2Fe-2S]-[ferredoxin] + 2 S-adenosyl-L-methionine = 2-methyladenosine(2503) in 23S rRNA + 5'-deoxyadenosine + L-methionine + 2 oxidized [2Fe-2S]-[ferredoxin] + S-adenosyl-L-homocysteine. The catalysed reaction is adenosine(37) in tRNA + 2 reduced [2Fe-2S]-[ferredoxin] + 2 S-adenosyl-L-methionine = 2-methyladenosine(37) in tRNA + 5'-deoxyadenosine + L-methionine + 2 oxidized [2Fe-2S]-[ferredoxin] + S-adenosyl-L-homocysteine. Its function is as follows. Specifically methylates position 2 of adenine 2503 in 23S rRNA and position 2 of adenine 37 in tRNAs. In Rhodococcus opacus (strain B4), this protein is Probable dual-specificity RNA methyltransferase RlmN.